Consider the following 352-residue polypeptide: Molybdenum import ATP-binding protein ModC (352 aa).

One can recognise an ABC transporter domain in the interval 1 to 229 (MLELNFSQTL…SVMHPWLPKE (229 aa)). 31 to 38 (GVSGAGKT) is an ATP binding site. The Mop domain occupies 289–352 (QTSIRNVLRA…AQVKSVSITA (64 aa)).

It belongs to the ABC transporter superfamily. Molybdate importer (TC 3.A.1.8) family. As to quaternary structure, the complex is composed of two ATP-binding proteins (ModC), two transmembrane proteins (ModB) and a solute-binding protein (ModA).

The protein resides in the cell inner membrane. It carries out the reaction molybdate(out) + ATP + H2O = molybdate(in) + ADP + phosphate + H(+). Functionally, part of the ABC transporter complex ModABC involved in molybdenum import. Responsible for energy coupling to the transport system. In Salmonella paratyphi A (strain ATCC 9150 / SARB42), this protein is Molybdenum import ATP-binding protein ModC.